The chain runs to 3414 residues: Hemocyanin 1 (3414 aa).

Residues 1-16 (MLSVRLLIVVLALANA) form the signal peptide. Position 17 (E17) interacts with a divalent metal cation. The interval 17 to 437 (ENLVRKSVEH…PPVKHHQSAN (421 aa)) is functional unit a (wall). H58 contributes to the Cu cation binding site. Residues C64 and C73 are joined by a disulfide bond. Residues 74 to 76 (CIH) constitute a cross-link (2'-(S-cysteinyl)-histidine (Cys-His)). Residues H76, H85, H195, H199, and H226 each contribute to the Cu cation site. C185 and C252 are oxidised to a cystine. The segment at residues 287–290 (CELH) is a cross-link (2'-(S-cysteinyl)-histidine (Cys-His)). A disulfide bridge connects residues C339 and C351. N-linked (GlcNAc...) asparagine glycosylation occurs at N403. The segment at 438–851 (LLVRKNINDL…RVKFDKVPRS (414 aa)) is functional unit b (wall). A Cu cation-binding site is contributed by H478. C484 and C495 form a disulfide bridge. Positions 496–498 (CVH) form a cross-link, 2'-(S-cysteinyl)-histidine (Cys-His). Residues H498 and H507 each coordinate Cu cation. N-linked (GlcNAc...) asparagine glycosylation is present at N545. C608 and C674 are oxidised to a cystine. Cu cation contacts are provided by H618, H622, and H649. One copy of the WD 1 repeat lies at 628 to 669 (SEHFSMSSLHYTAFDPLFYFHHSNVDRLWAVWQALQMRRHKP). An a divalent metal cation-binding site is contributed by E737. The tract at residues 852–1271 (RLIRKNVDRL…EVYQAEVTSA (420 aa)) is functional unit c (wall). A Cu cation-binding site is contributed by H892. The cysteines at positions 898 and 909 are disulfide-linked. Residues 910–912 (CVH) constitute a cross-link (2'-(S-cysteinyl)-histidine (Cys-His)). The Cu cation site is built by H912, H921, H1031, H1035, and H1062. Intrachain disulfides connect C1021–C1088 and C1178–C1184. One copy of the WD 2 repeat lies at 1041–1082 (AQPYGMASLRYTAFDPLFYLHHSNTDRIWAIWQALQKYRGKP). A functional unit d (wall) region spans residues 1272–1680 (NRIRKNIENL…AHTDDGHTEP (409 aa)). H1309 is a binding site for Cu cation. An intrachain disulfide couples C1315 to C1324. The segment at residues 1325 to 1327 (CVH) is a cross-link (2'-(S-cysteinyl)-histidine (Cys-His)). Positions 1327, 1336, 1440, 1444, and 1471 each coordinate Cu cation. 2 disulfide bridges follow: C1430–C1497 and C1585–C1595. A WD 3 repeat occupies 1450–1491 (KGKYSMSNLDYAAFDPVFFLHHATTDRIWAIWQDLQRFRKRP). A glycan (N-linked (GlcNAc...) asparagine) is linked at N1648. The tract at residues 1681–2097 (VMIRKDITQL…HDISSHHLSL (417 aa)) is functional unit e (wall). H1721 contacts Cu cation. A disulfide bridge links C1727 with C1738. The segment at residues 1739-1741 (CVH) is a cross-link (2'-(S-cysteinyl)-histidine (Cys-His)). Cu cation is bound by residues H1741, H1750, H1863, H1867, and H1894. 2 disulfides stabilise this stretch: C1853–C1920 and C2009–C2015. One copy of the WD 4 repeat lies at 1873–1914 (KEPYGIGHLHYASYDPLFYIHHSQTDRIWAIWQSLQRFRGLS). The functional unit f (wall) stretch occupies residues 2098–2517 (NKVRHDLSTL…EDHHSSSMAG (420 aa)). H2138 provides a ligand contact to Cu cation. C2144 and C2154 are joined by a disulfide. N-linked (GlcNAc...) asparagine glycosylation is present at N2145. The 2'-(S-cysteinyl)-histidine (Cys-His) cross-link spans 2155–2157 (CIH). 5 residues coordinate Cu cation: H2157, H2166, H2276, H2280, and H2307. One copy of the WD 5 repeat lies at 2163–2199 (PHWHRLYTLQFEQALRRHGSSVAVPYWDWTKPIHNIP). 2 cysteine pairs are disulfide-bonded: C2266/C2333 and C2420/C2426. E2424 contributes to the a divalent metal cation binding site. Residues 2518–2921 (HGVRKEINTL…EKHHEDHHED (404 aa)) form a functional unit g (internal arc) region. Residue H2558 participates in Cu cation binding. The cysteines at positions 2564 and 2574 are disulfide-linked. N2571 is a glycosylation site (N-linked (GlcNAc...) asparagine). The segment at residues 2575–2577 (CTH) is a cross-link (2'-(S-cysteinyl)-histidine (Cys-His)). Positions 2577, 2586, 2686, 2690, and 2717 each coordinate Cu cation. Intrachain disulfides connect C2676–C2743 and C2830–C2836. The stretch at 2696-2737 (LTPYGMSTLEYTTYDPLFWLHHANTDRIWAIWQALQEYRGLP) is one WD 6 repeat. A functional unit h (internal slab) region spans residues 2922–3414 (ILVRKNIHSL…LRIHVHVDDE (493 aa)). Cu cation is bound at residue H2962. A disulfide bond links C2968 and C2978. Positions 2979-2981 (CVH) form a cross-link, 2'-(S-cysteinyl)-histidine (Cys-His). Positions 2981, 2990, 3091, 3095, and 3122 each coordinate Cu cation. An intrachain disulfide couples C3081 to C3148. One copy of the WD 7 repeat lies at 3101–3142 (AEKYSMSTLEYSAFDPYFMIHHASLDKIWIIWQELQKRRVKP). N-linked (GlcNAc...) asparagine glycosylation occurs at N3278. Residues C3367 and C3400 are joined by a disulfide bond.

It belongs to the tyrosinase family. Hemocyanin subfamily. As to quaternary structure, homo-didecamer, with two decamers assembled face-to-face at their open ends. This didecamer form a stable 25 nM cylinder wall. Post-translationally, probably N-glycosylated. Asn-1280 and Asn-2484 are buried deeply in the protein which make them inaccessible for sugar attachment. Asn-3278 N-glycan is likely to represent a diantennate carbohydrate tree. The didecamer is almost evenly tagged by a total of 120 sugar trees. As to expression, hemolymph.

It localises to the secreted. The protein localises to the extracellular space. In terms of biological role, hemocyanins are copper-containing oxygen carriers occurring freely dissolved in the hemolymph of many mollusks and arthropods. The sequence is that of Hemocyanin 1 from Megathura crenulata (Giant keyhole limpet).